Here is a 429-residue protein sequence, read N- to C-terminus: Nicotinate phosphoribosyltransferase (429 aa).

3 residues coordinate nicotinate: Tyr-15, Phe-177, and Thr-229. His-232 is subject to Phosphohistidine; by autocatalysis. Position 294 (Arg-294) interacts with nicotinate. Residue Thr-355 participates in 5-phospho-alpha-D-ribose 1-diphosphate binding.

The protein belongs to the NAPRTase family. Transiently phosphorylated on a His residue during the reaction cycle. Phosphorylation strongly increases the affinity for substrates and increases the rate of nicotinate D-ribonucleotide production. Dephosphorylation regenerates the low-affinity form of the enzyme, leading to product release.

The protein resides in the cytoplasm. It localises to the nucleus. The catalysed reaction is nicotinate + 5-phospho-alpha-D-ribose 1-diphosphate + ATP + H2O = nicotinate beta-D-ribonucleotide + ADP + phosphate + diphosphate. Its pathway is cofactor biosynthesis; NAD(+) biosynthesis; nicotinate D-ribonucleotide from nicotinate: step 1/1. Functionally, catalyzes the first step in the biosynthesis of NAD from nicotinic acid, the ATP-dependent synthesis of beta-nicotinate D-ribonucleotide from nicotinate and 5-phospho-D-ribose 1-phosphate. Essential for growth under anaerobic conditions. The sequence is that of Nicotinate phosphoribosyltransferase (NPT1) from Saccharomyces cerevisiae (strain ATCC 204508 / S288c) (Baker's yeast).